The sequence spans 332 residues: Autoinducer 2 import system permease protein LsrD (332 aa).

A run of 7 helical transmembrane segments spans residues L5–L25, I43–I63, G83–F103, L116–M136, L160–L180, I210–V230, and I259–L279.

The protein belongs to the binding-protein-dependent transport system permease family. AraH/RbsC subfamily. As to quaternary structure, the complex is composed of two ATP-binding proteins (LsrA), two transmembrane proteins (LsrC and LsrD) and a solute-binding protein (LsrB).

Its subcellular location is the cell inner membrane. Part of the ABC transporter complex LsrABCD involved in autoinducer 2 (AI-2) import. Probably responsible for the translocation of the substrate across the membrane. This is Autoinducer 2 import system permease protein LsrD (lsrD) from Klebsiella pneumoniae subsp. pneumoniae (strain ATCC 700721 / MGH 78578).